The primary structure comprises 556 residues: 2-isopropylmalate synthase (556 aa).

One can recognise a Pyruvate carboxyltransferase domain in the interval Pro33–Asp307. 4 residues coordinate Mg(2+): Asp42, His246, His248, and Asn282. Residues Ala439–Ala556 form a regulatory domain region.

Belongs to the alpha-IPM synthase/homocitrate synthase family. LeuA type 2 subfamily. In terms of assembly, homodimer. The cofactor is Mg(2+).

The protein resides in the cytoplasm. It carries out the reaction 3-methyl-2-oxobutanoate + acetyl-CoA + H2O = (2S)-2-isopropylmalate + CoA + H(+). It functions in the pathway amino-acid biosynthesis; L-leucine biosynthesis; L-leucine from 3-methyl-2-oxobutanoate: step 1/4. Functionally, catalyzes the condensation of the acetyl group of acetyl-CoA with 3-methyl-2-oxobutanoate (2-ketoisovalerate) to form 3-carboxy-3-hydroxy-4-methylpentanoate (2-isopropylmalate). This Ectopseudomonas mendocina (strain ymp) (Pseudomonas mendocina) protein is 2-isopropylmalate synthase.